A 231-amino-acid chain; its full sequence is 2-C-methyl-D-erythritol 4-phosphate cytidylyltransferase (231 aa).

Belongs to the IspD/TarI cytidylyltransferase family. IspD subfamily.

It catalyses the reaction 2-C-methyl-D-erythritol 4-phosphate + CTP + H(+) = 4-CDP-2-C-methyl-D-erythritol + diphosphate. It participates in isoprenoid biosynthesis; isopentenyl diphosphate biosynthesis via DXP pathway; isopentenyl diphosphate from 1-deoxy-D-xylulose 5-phosphate: step 2/6. Functionally, catalyzes the formation of 4-diphosphocytidyl-2-C-methyl-D-erythritol from CTP and 2-C-methyl-D-erythritol 4-phosphate (MEP). This chain is 2-C-methyl-D-erythritol 4-phosphate cytidylyltransferase, found in Mycobacterium bovis (strain BCG / Pasteur 1173P2).